Here is a 457-residue protein sequence, read N- to C-terminus: UDP-glucosyltransferase 45 (457 aa).

Histidine 21 acts as the Proton acceptor in catalysis. Histidine 21 provides a ligand contact to an anthocyanidin. Residue aspartate 112 is the Charge relay of the active site. Positions 134, 336, 351, 354, 355, 356, 359, 375, and 376 each coordinate UDP-alpha-D-glucose.

It belongs to the UDP-glycosyltransferase family.

It carries out the reaction (20S)-protopanaxadiol + UDP-alpha-D-glucose = (20S)-ginsenoside Rh2 + UDP + H(+). The protein operates within secondary metabolite biosynthesis; terpenoid biosynthesis. Its function is as follows. Component of the triterpene saponins (e.g. PPD-type ginsenosides) biosynthetic pathway. Glycosyltransferase that catalyzes the biosynthesis of ginsenoside Rh2 from protopanaxadiol (PPD). This Panax ginseng (Korean ginseng) protein is UDP-glucosyltransferase 45.